The following is a 154-amino-acid chain: MPLPTSLTTLDGTPLAPEVIADKVVLFVNVASKCGLTPQYSGLVALDKAYGEKGLVIIGVPCNQFGAQEPGSPEEIKDFTKTKYDVDFTLLEKQDVNGPNRSPLYQFLVGDGEDISWNFGKFLIGRDGQVVARFDPQTKPDDTNLKAAIEKALG.

Cys-34 is an active-site residue.

The protein belongs to the glutathione peroxidase family. As to quaternary structure, monomer.

The catalysed reaction is a hydroperoxy polyunsaturated fatty acid + NADPH + H(+) = a hydroxy polyunsaturated fatty acid + NADP(+) + H2O. With respect to regulation, mercaptosuccinate, pCMB, and nethylmaleimide act as inhibitors of the catalytic activity. In terms of biological role, hydroperoxy fatty acid reductase essential for the removal of lipid hydroperoxides under normal and stress conditions, leading to the protection of membrane integrity. This is Hydroperoxy fatty acid reductase Gpx2 (gpx2) from Synechocystis sp. (strain ATCC 27184 / PCC 6803 / Kazusa).